Reading from the N-terminus, the 236-residue chain is 2-C-methyl-D-erythritol 4-phosphate cytidylyltransferase (236 aa).

This sequence belongs to the IspD/TarI cytidylyltransferase family. IspD subfamily.

The catalysed reaction is 2-C-methyl-D-erythritol 4-phosphate + CTP + H(+) = 4-CDP-2-C-methyl-D-erythritol + diphosphate. Its pathway is isoprenoid biosynthesis; isopentenyl diphosphate biosynthesis via DXP pathway; isopentenyl diphosphate from 1-deoxy-D-xylulose 5-phosphate: step 2/6. Its function is as follows. Catalyzes the formation of 4-diphosphocytidyl-2-C-methyl-D-erythritol from CTP and 2-C-methyl-D-erythritol 4-phosphate (MEP). This Burkholderia cenocepacia (strain ATCC BAA-245 / DSM 16553 / LMG 16656 / NCTC 13227 / J2315 / CF5610) (Burkholderia cepacia (strain J2315)) protein is 2-C-methyl-D-erythritol 4-phosphate cytidylyltransferase.